Consider the following 471-residue polypeptide: UDP-N-acetylmuramate--L-alanine ligase (471 aa).

Residue 114–120 (GTHGKTT) coordinates ATP.

Belongs to the MurCDEF family.

It localises to the cytoplasm. It catalyses the reaction UDP-N-acetyl-alpha-D-muramate + L-alanine + ATP = UDP-N-acetyl-alpha-D-muramoyl-L-alanine + ADP + phosphate + H(+). It participates in cell wall biogenesis; peptidoglycan biosynthesis. In terms of biological role, cell wall formation. This is UDP-N-acetylmuramate--L-alanine ligase from Chlorobaculum parvum (strain DSM 263 / NCIMB 8327) (Chlorobium vibrioforme subsp. thiosulfatophilum).